A 647-amino-acid chain; its full sequence is Exoribonuclease 2 (647 aa).

Positions 190 to 519 constitute an RNB domain; sequence REDLTSLPFV…NHRLLKAIIK (330 aa). An S1 motif domain is found at 564 to 646; the sequence is EQRFSAEVID…ETRSIVARPV (83 aa).

The protein belongs to the RNR ribonuclease family. RNase II subfamily.

It is found in the cytoplasm. It carries out the reaction Exonucleolytic cleavage in the 3'- to 5'-direction to yield nucleoside 5'-phosphates.. Involved in mRNA degradation. Hydrolyzes single-stranded polyribonucleotides processively in the 3' to 5' direction. The chain is Exoribonuclease 2 from Erwinia tasmaniensis (strain DSM 17950 / CFBP 7177 / CIP 109463 / NCPPB 4357 / Et1/99).